We begin with the raw amino-acid sequence, 352 residues long: Probable transcription factor At1g11510 (352 aa).

2 disordered regions span residues 1-132 and 239-269; these read MSRR…GGEE and MKSN…KNNC. A compositionally biased stretch (acidic residues) spans 56 to 66; it reads SGSDEETDSDS. Composition is skewed to basic and acidic residues over residues 89–101, 117–132, and 241–259; these read KTSE…RSLE, VSGE…GGEE, and SNEK…HELD.

The protein belongs to the GeBP family.

This chain is Probable transcription factor At1g11510, found in Arabidopsis thaliana (Mouse-ear cress).